A 445-amino-acid chain; its full sequence is uncharacterized protein (445 aa).

His66 contributes to the Zn(2+) binding site. The active-site Proton acceptor is the Glu69. Zn(2+) is bound by residues His70 and Glu146. A disordered region spans residues Gly232 to Leu251.

Belongs to the peptidase M16 family. Zn(2+) serves as cofactor.

This is an uncharacterized protein from Mycobacterium leprae (strain TN).